We begin with the raw amino-acid sequence, 169 residues long: NADH-quinone oxidoreductase subunit B (169 aa).

4 residues coordinate [4Fe-4S] cluster: Cys42, Cys43, Cys107, and Cys136.

Belongs to the complex I 20 kDa subunit family. In terms of assembly, NDH-1 is composed of 14 different subunits. Subunits NuoB, C, D, E, F, and G constitute the peripheral sector of the complex. Requires [4Fe-4S] cluster as cofactor.

It is found in the cell inner membrane. It catalyses the reaction a quinone + NADH + 5 H(+)(in) = a quinol + NAD(+) + 4 H(+)(out). Its function is as follows. NDH-1 shuttles electrons from NADH, via FMN and iron-sulfur (Fe-S) centers, to quinones in the respiratory chain. The immediate electron acceptor for the enzyme in this species is believed to be ubiquinone. Couples the redox reaction to proton translocation (for every two electrons transferred, four hydrogen ions are translocated across the cytoplasmic membrane), and thus conserves the redox energy in a proton gradient. This is NADH-quinone oxidoreductase subunit B from Nitratiruptor sp. (strain SB155-2).